We begin with the raw amino-acid sequence, 174 residues long: ATP-dependent protease subunit HslV (174 aa).

The active site involves Thr2. Residues Gly157, Cys160, and Thr163 each contribute to the Na(+) site.

It belongs to the peptidase T1B family. HslV subfamily. As to quaternary structure, a double ring-shaped homohexamer of HslV is capped on each side by a ring-shaped HslU homohexamer. The assembly of the HslU/HslV complex is dependent on binding of ATP.

Its subcellular location is the cytoplasm. It carries out the reaction ATP-dependent cleavage of peptide bonds with broad specificity.. With respect to regulation, allosterically activated by HslU binding. In terms of biological role, protease subunit of a proteasome-like degradation complex believed to be a general protein degrading machinery. This Yersinia pseudotuberculosis serotype I (strain IP32953) protein is ATP-dependent protease subunit HslV.